Here is a 212-residue protein sequence, read N- to C-terminus: MQNVDNTAVIDAANALPGRLTSIPVSPLHAVHGHSMTYIPEGMDLAFFAMGCFWGAERLFWQQPGVYSTAAGYSGGHTPNPTYHEVCSGRTGHAEVVRVVFDPAVISYQQLLQIFWENHDPAQGMRQGGDVGTQYRSAIYVLTPEQEEQAHKSRERFQQAMEKAGDQRVITSEITVALPFYYAEDDHQQYLHKNPHGYCGLGGIGVCLPPNV.

Residue cysteine 52 is part of the active site.

Belongs to the MsrA Met sulfoxide reductase family.

It carries out the reaction L-methionyl-[protein] + [thioredoxin]-disulfide + H2O = L-methionyl-(S)-S-oxide-[protein] + [thioredoxin]-dithiol. The catalysed reaction is [thioredoxin]-disulfide + L-methionine + H2O = L-methionine (S)-S-oxide + [thioredoxin]-dithiol. Its function is as follows. Has an important function as a repair enzyme for proteins that have been inactivated by oxidation. Catalyzes the reversible oxidation-reduction of methionine sulfoxide in proteins to methionine. The polypeptide is Peptide methionine sulfoxide reductase MsrA (Yersinia pseudotuberculosis serotype O:1b (strain IP 31758)).